The primary structure comprises 131 residues: Heat shock protein 15 homolog (131 aa).

Residues 6 to 67 (VRLDKWLWAA…NEEKEIKIIA (62 aa)) form the S4 RNA-binding domain. The segment at 98 to 131 (ARKNNSLSMPHPDRRPNKKERRDLLKFKHQDKFE) is disordered. A compositionally biased stretch (basic and acidic residues) spans 108-131 (HPDRRPNKKERRDLLKFKHQDKFE).

Belongs to the HSP15 family.

Functionally, involved in the recycling of free 50S ribosomal subunits that still carry a nascent chain. Binds RNA more specifically than DNA. Binds with very high affinity to the free 50S ribosomal subunit. Does not bind it when it is part of the 70S ribosome. This Haemophilus influenzae (strain ATCC 51907 / DSM 11121 / KW20 / Rd) protein is Heat shock protein 15 homolog (hslR).